We begin with the raw amino-acid sequence, 490 residues long: ATP synthase subunit beta (490 aa).

Residue 175 to 182 (GGAGVGKT) coordinates ATP.

The protein belongs to the ATPase alpha/beta chains family. As to quaternary structure, F-type ATPases have 2 components, CF(1) - the catalytic core - and CF(0) - the membrane proton channel. CF(1) has five subunits: alpha(3), beta(3), gamma(1), delta(1), epsilon(1). CF(0) has three main subunits: a(1), b(2) and c(9-12). The alpha and beta chains form an alternating ring which encloses part of the gamma chain. CF(1) is attached to CF(0) by a central stalk formed by the gamma and epsilon chains, while a peripheral stalk is formed by the delta and b chains.

Its subcellular location is the cell membrane. It catalyses the reaction ATP + H2O + 4 H(+)(in) = ADP + phosphate + 5 H(+)(out). Functionally, produces ATP from ADP in the presence of a proton gradient across the membrane. The catalytic sites are hosted primarily by the beta subunits. This is ATP synthase subunit beta from Acidothermus cellulolyticus (strain ATCC 43068 / DSM 8971 / 11B).